A 302-amino-acid polypeptide reads, in one-letter code: MDNRTLTHLRQLEAESIHIIREVVAEFENPVMLYSIGKDSSVMLHLARKAFYPGTPPFPLMHVDTTWKFREMIEFRDRMAKEAGMELIVHINQEGVAQGIGPFSHGSRVHTDVMKTQSLKQALDKYRFDAAFGGARRDEERSRAKERVYSFRDRNHAWDPKNQRPELWRLYNGQVHKGESIRVFPLSNWTELDIWQYIYLEEIPIVPLYYAARRPVVERDGTLIMVDDDRMPLEPGEEPEMAMVRFRTLGCYPLTGAIRSEAATLPEIIQEMLLTKSSERQGRVIDHDAAGSMEEKKRQGYF.

Belongs to the PAPS reductase family. CysD subfamily. In terms of assembly, heterodimer composed of CysD, the smaller subunit, and CysN.

The enzyme catalyses sulfate + ATP + H(+) = adenosine 5'-phosphosulfate + diphosphate. Its pathway is sulfur metabolism; hydrogen sulfide biosynthesis; sulfite from sulfate: step 1/3. With CysN forms the ATP sulfurylase (ATPS) that catalyzes the adenylation of sulfate producing adenosine 5'-phosphosulfate (APS) and diphosphate, the first enzymatic step in sulfur assimilation pathway. APS synthesis involves the formation of a high-energy phosphoric-sulfuric acid anhydride bond driven by GTP hydrolysis by CysN coupled to ATP hydrolysis by CysD. In Alkalilimnicola ehrlichii (strain ATCC BAA-1101 / DSM 17681 / MLHE-1), this protein is Sulfate adenylyltransferase subunit 2 2.